Consider the following 272-residue polypeptide: D-aminoacyl-tRNA deacylase (272 aa).

In terms of assembly, monomer. Zn(2+) serves as cofactor.

It carries out the reaction a D-aminoacyl-tRNA + H2O = a tRNA + a D-alpha-amino acid + H(+). The catalysed reaction is glycyl-tRNA(Ala) + H2O = tRNA(Ala) + glycine + H(+). It catalyses the reaction D-tyrosyl-tRNA(Tyr) + H2O = D-tyrosine + tRNA(Tyr). In terms of biological role, D-aminoacyl-tRNA deacylase with broad substrate specificity. By recycling D-aminoacyl-tRNA to D-amino acids and free tRNA molecules, this enzyme counteracts the toxicity associated with the formation of D-aminoacyl-tRNA entities in vivo. Catalyzes the hydrolysis of D-tyrosyl-tRNA(Tyr) and D-aspartyl-tRNA(Asp). This Pyrococcus abyssi (strain GE5 / Orsay) protein is D-aminoacyl-tRNA deacylase.